Consider the following 260-residue polypeptide: MNPAPKKPSLLFSSLLFSSAAQAAGEDHGRGPYVQADLAYAYEHITHDYPEQTDPSKGKISTVSDYFRNIRTHSIHPRVSVGYDFGGWRIAADYARYRKWNNNKYSVSIKELLRNKVNGNRTDRKTENQENGTFHAVSSLGLSAVYDFKLNDKFKPYIGARVAYGHVRHSIDSTKKTTEVTTILHGPGTTPTVYPGKNTQDAHRESDSIRRVGLGAVAGVGIDITPNLTLDAGYRYHYWGRLENTRFKTHEASLGVRYRF.

Residues 1 to 23 form the signal peptide; that stretch reads MNPAPKKPSLLFSSLLFSSAAQA.

It belongs to the opacity porin family.

The protein resides in the cell outer membrane. Implicated in a number of adherence functions. OPA proteins are implicated in pathogenesis and are subject to phase variation. The protein is Opacity protein opA58 (opaJ) of Neisseria gonorrhoeae.